A 175-amino-acid chain; its full sequence is MSTIAKDQTQINEKIRAKELRLIGQDGEQIGVKSKREALEMAERVDLDLVVVAPNAKPPVARIMDYGKYKFEQQKKEKEMKKKQKVINVKELRLSPTIEEHDFQTKLKNGRKFLSKGDKCKVSIRFRGRAITHKEIGQRVLEKFADECKDIATVEQKPKMEGRQMFIMLAPINEK.

It belongs to the IF-3 family. In terms of assembly, monomer.

Its subcellular location is the cytoplasm. Functionally, IF-3 binds to the 30S ribosomal subunit and shifts the equilibrium between 70S ribosomes and their 50S and 30S subunits in favor of the free subunits, thus enhancing the availability of 30S subunits on which protein synthesis initiation begins. This Staphylococcus epidermidis (strain ATCC 35984 / DSM 28319 / BCRC 17069 / CCUG 31568 / BM 3577 / RP62A) protein is Translation initiation factor IF-3.